Reading from the N-terminus, the 95-residue chain is Small ribosomal subunit protein bS6 (95 aa).

Belongs to the bacterial ribosomal protein bS6 family.

In terms of biological role, binds together with bS18 to 16S ribosomal RNA. The sequence is that of Small ribosomal subunit protein bS6 from Caldanaerobacter subterraneus subsp. tengcongensis (strain DSM 15242 / JCM 11007 / NBRC 100824 / MB4) (Thermoanaerobacter tengcongensis).